A 235-amino-acid chain; its full sequence is tRNA (guanine-N(1)-)-methyltransferase (235 aa).

S-adenosyl-L-methionine is bound by residues G114 and 134 to 139 (IGDYIL).

Belongs to the RNA methyltransferase TrmD family. In terms of assembly, homodimer.

The protein resides in the cytoplasm. It catalyses the reaction guanosine(37) in tRNA + S-adenosyl-L-methionine = N(1)-methylguanosine(37) in tRNA + S-adenosyl-L-homocysteine + H(+). Functionally, specifically methylates guanosine-37 in various tRNAs. This chain is tRNA (guanine-N(1)-)-methyltransferase, found in Ehrlichia ruminantium (strain Gardel).